A 776-amino-acid polypeptide reads, in one-letter code: Bifunctional lysine-specific demethylase and histidyl-hydroxylase NO66 (776 aa).

Disordered regions lie at residues 1–57 (MGKK…EPKF), 87–126 (EQNGGKKRRHREISPKMEAKKPKVESKSKDGVAAKKAHKH), and 165–288 (ILDE…DDEG). Basic and acidic residues-rich tracts occupy residues 47–57 (HYKEPSKEPKF) and 98–119 (EISPKMEAKKPKVESKSKDGVA). Positions 166–204 (LDEEVEDEEIDEEEFEDEEEVEDEEGMDEDETEIDESEM) are enriched in acidic residues. Positions 206-216 (VDPKDIERCIE) are enriched in basic and acidic residues. Residues 217 to 288 (FEDVDDEDEM…EMDADSDDEG (72 aa)) are compositionally biased toward acidic residues. Residues 425 to 569 (QLVNPQTFDD…NLMEKVIPEA (145 aa)) enclose the JmjC domain. Residues His468, Asp470, and His535 each contribute to the Fe cation site.

The protein belongs to the ROX family. NO66 subfamily. The cofactor is Fe(2+).

Its subcellular location is the nucleus. It carries out the reaction N(6),N(6)-dimethyl-L-lysyl(36)-[histone H3] + 2 2-oxoglutarate + 2 O2 = L-lysyl(36)-[histone H3] + 2 formaldehyde + 2 succinate + 2 CO2. Its function is as follows. Oxygenase that can act as both a histone lysine demethylase and a ribosomal histidine hydroxylase. Specifically demethylates 'Lys-4' (H3K4me) and 'Lys-36' (H3K36me) of histone H3, thereby playing a central role in histone code. The protein is Bifunctional lysine-specific demethylase and histidyl-hydroxylase NO66 (jmjc-1) of Caenorhabditis briggsae.